We begin with the raw amino-acid sequence, 77 residues long: Small ribosomal subunit protein bS18 (77 aa).

Belongs to the bacterial ribosomal protein bS18 family. As to quaternary structure, part of the 30S ribosomal subunit. Forms a tight heterodimer with protein bS6.

Binds as a heterodimer with protein bS6 to the central domain of the 16S rRNA, where it helps stabilize the platform of the 30S subunit. The sequence is that of Small ribosomal subunit protein bS18 from Bacillus cereus (strain ATCC 10987 / NRS 248).